Here is a 222-residue protein sequence, read N- to C-terminus: MAYDSNYTFPDPETSDKQGLLAIGGVLTPKRVLQAYSQGIFPWYEPGNPVLWWSPNPRLILIPNEFKISRSLKKTLKKPFKLTVDTAFQRVISYCATCSDRANKTWITSEMIETYTQLHEMGYAHSFEIWDGSELVGGLYGISLGHAFFGESMFHTITDASKVALHFLCSIMQSWNFDFIDCQLPTLHLMRLGAKIISRKEFLHMLQETLKYPDKKGNWSVN.

Belongs to the L/F-transferase family.

The protein resides in the cytoplasm. It catalyses the reaction N-terminal L-lysyl-[protein] + L-leucyl-tRNA(Leu) = N-terminal L-leucyl-L-lysyl-[protein] + tRNA(Leu) + H(+). The enzyme catalyses N-terminal L-arginyl-[protein] + L-leucyl-tRNA(Leu) = N-terminal L-leucyl-L-arginyl-[protein] + tRNA(Leu) + H(+). The catalysed reaction is L-phenylalanyl-tRNA(Phe) + an N-terminal L-alpha-aminoacyl-[protein] = an N-terminal L-phenylalanyl-L-alpha-aminoacyl-[protein] + tRNA(Phe). Its function is as follows. Functions in the N-end rule pathway of protein degradation where it conjugates Leu, Phe and, less efficiently, Met from aminoacyl-tRNAs to the N-termini of proteins containing an N-terminal arginine or lysine. The polypeptide is Leucyl/phenylalanyl-tRNA--protein transferase (Legionella pneumophila (strain Lens)).